Consider the following 654-residue polypeptide: MDELLGEALSAENQAGESTVESEKLVTPEDVMTISSLEQRTLNPDLFLYKELVKAHLGERAASVIGMLVALGRLSVRELVEKIDGMDVDSVKTTLVSLTQLRCVKYLQETAISGKKTTYYYYNEEGIHILLYSGLIIDEIITQMRVNDEEEHKQLVAEIVQNVISLGSLTVEDYLSSVTSDSMKYTISSLFVQLCEMGYLIQISKLHYTPIEDLWQFLYEKHYKNIPRNSPLSDLKKRSQAKMNAKTDFAKIINKPNELSQILTVDPKTSLRIVKPTVSLTINLDRFMKGRRSKQLINLAKTRVGSVTAQVYKIALRLTEQKSPKIRDPLTQTGLLQDLEEAKSFQDEAELVEEKTPGLTFNAIDLARHLPAELDLRGSLLSRKPSDNKKRSGSNAAASLPSKKLKTEDGFVIPALPAAVSKSLQESGDTQEEDEEEEDLDADTEDPHSASLINSHLKILASSNFPFLNETKPGVYYVPYSKLMPVLKSSVYEYVIASTLGPSAMRLSRCIRDNKLVSEKIINSTALMKEKDIRSTLASLIRYNSVEIQEVPRTADRSASRAVFLFRCKETHSYNFMRQNLEWNMANLLFKKEKLKQENSTLLKKANRDDVKGRENELLLPSELNQLKMVNERELNVFARLSRLLSLWEVFQMA.

T27 is subject to Phosphothreonine. 2 disordered regions span residues L381–P401 and K422–H448. Residues S392 and S394 each carry the phosphoserine modification. The segment covering D429–T444 has biased composition (acidic residues). The tract at residues L581–L602 is leucine-zipper.

It belongs to the RNA polymerase beta chain family. In terms of assembly, component of the RNA polymerase III (Pol III) complex consisting of 17 subunits.

Its subcellular location is the cytoplasm. It is found in the nucleus. DNA-dependent RNA polymerase catalyzes the transcription of DNA into RNA using the four ribonucleoside triphosphates as substrates. Specific core component of RNA polymerase III which synthesizes small RNAs, such as 5S rRNA and tRNAs. The polypeptide is DNA-directed RNA polymerase III subunit RPC3 (RPC82) (Saccharomyces cerevisiae (strain YJM789) (Baker's yeast)).